A 332-amino-acid chain; its full sequence is DNA-directed RNA polymerase subunit alpha (332 aa).

The alpha N-terminal domain (alpha-NTD) stretch occupies residues 1–232 (MKGYLKDFLK…DQLSVFVDLE (232 aa)). Residues 247-332 (IDPVLLRPID…SLGDRARIAG (86 aa)) are alpha C-terminal domain (alpha-CTD).

Belongs to the RNA polymerase alpha chain family. In terms of assembly, homodimer. The RNAP catalytic core consists of 2 alpha, 1 beta, 1 beta' and 1 omega subunit. When a sigma factor is associated with the core the holoenzyme is formed, which can initiate transcription.

It carries out the reaction RNA(n) + a ribonucleoside 5'-triphosphate = RNA(n+1) + diphosphate. In terms of biological role, DNA-dependent RNA polymerase catalyzes the transcription of DNA into RNA using the four ribonucleoside triphosphates as substrates. The protein is DNA-directed RNA polymerase subunit alpha of Halorhodospira halophila (strain DSM 244 / SL1) (Ectothiorhodospira halophila (strain DSM 244 / SL1)).